A 176-amino-acid polypeptide reads, in one-letter code: ATP synthase subunit b (176 aa).

A helical membrane pass occupies residues 18–38; it reads FGLDATVWVSIAMLVFLGILV.

This sequence belongs to the ATPase B chain family. F-type ATPases have 2 components, F(1) - the catalytic core - and F(0) - the membrane proton channel. F(1) has five subunits: alpha(3), beta(3), gamma(1), delta(1), epsilon(1). F(0) has three main subunits: a(1), b(2) and c(10-14). The alpha and beta chains form an alternating ring which encloses part of the gamma chain. F(1) is attached to F(0) by a central stalk formed by the gamma and epsilon chains, while a peripheral stalk is formed by the delta and b chains.

Its subcellular location is the cell inner membrane. F(1)F(0) ATP synthase produces ATP from ADP in the presence of a proton or sodium gradient. F-type ATPases consist of two structural domains, F(1) containing the extramembraneous catalytic core and F(0) containing the membrane proton channel, linked together by a central stalk and a peripheral stalk. During catalysis, ATP synthesis in the catalytic domain of F(1) is coupled via a rotary mechanism of the central stalk subunits to proton translocation. Functionally, component of the F(0) channel, it forms part of the peripheral stalk, linking F(1) to F(0). This chain is ATP synthase subunit b, found in Sphingopyxis alaskensis (strain DSM 13593 / LMG 18877 / RB2256) (Sphingomonas alaskensis).